A 280-amino-acid polypeptide reads, in one-letter code: Protein lyl-1 (280 aa).

The tract at residues 1 to 60 (MCPPQAQAEVGPTMTEKAEMVCAPSPAPAPPPKPASPGPPQVEEVGHRGGSSPPRLPPGV) is disordered. Positions 25–40 (SPAPAPPPKPASPGPP) are enriched in pro residues. One can recognise a bHLH domain in the interval 150–202 (ARRVFTNSRERWRQQNVNGAFAELRKLLPTHPPDRKLSKNEVLRLAMKYIGFL). Residues 214-280 (AAGPTPPGPR…EQTALSPEVR (67 aa)) are disordered. The span at 229–245 (RVPDDGARRGSGRRAEA) shows a compositional bias: basic and acidic residues. A compositionally biased stretch (low complexity) spans 257–267 (PDGSPGGAARP). S260 and S276 each carry phosphoserine.

In terms of assembly, efficient DNA binding requires dimerization with another bHLH protein.

The protein localises to the nucleus. This Homo sapiens (Human) protein is Protein lyl-1 (LYL1).